Consider the following 81-residue polypeptide: Large ribosomal subunit protein bL31B (81 aa).

Belongs to the bacterial ribosomal protein bL31 family. Type B subfamily. In terms of assembly, part of the 50S ribosomal subunit.

This chain is Large ribosomal subunit protein bL31B, found in Bacillus cereus (strain G9842).